A 346-amino-acid chain; its full sequence is Very-long-chain 3-oxoacyl-CoA reductase (346 aa).

The chain crosses the membrane as a helical span at residues 26–46; that stretch reads GASALLAAGSLFVVSRALVFV. NADP(+)-binding residues include Val-71, Asp-126, Asp-134, Asn-153, Tyr-220, Lys-224, Ile-253, and Ser-255. The active-site Proton donor is the Tyr-220. Lys-224 functions as the Lowers pKa of active site Tyr in the catalytic mechanism.

This sequence belongs to the short-chain dehydrogenases/reductases (SDR) family.

The protein localises to the endoplasmic reticulum membrane. The enzyme catalyses a very-long-chain (3R)-3-hydroxyacyl-CoA + NADP(+) = a very-long-chain 3-oxoacyl-CoA + NADPH + H(+). It functions in the pathway lipid metabolism; fatty acid biosynthesis. Component of the microsomal membrane bound fatty acid elongation system, which produces the 26-carbon very long-chain fatty acids (VLCFA) from palmitate. Catalyzes the reduction of the 3-ketoacyl-CoA intermediate that is formed in each cycle of fatty acid elongation. VLCFAs serve as precursors for ceramide and sphingolipids. In Aspergillus niger (strain ATCC MYA-4892 / CBS 513.88 / FGSC A1513), this protein is Very-long-chain 3-oxoacyl-CoA reductase.